Consider the following 161-residue polypeptide: Allophycocyanin beta chain (161 aa).

N71 bears the N4-methylasparagine mark. C81 contacts (2R,3E)-phycocyanobilin.

Belongs to the phycobiliprotein family. In terms of assembly, heterodimer of an alpha and a beta chain. Contains one covalently linked phycocyanobilin chromophore.

It is found in the cellular thylakoid membrane. In terms of biological role, light-harvesting photosynthetic bile pigment-protein from the phycobiliprotein complex. Allophycocyanin has a maximum absorption at approximately 650 nanometers. The sequence is that of Allophycocyanin beta chain (apcB) from Synechococcus sp. (strain ATCC 27144 / PCC 6301 / SAUG 1402/1) (Anacystis nidulans).